Reading from the N-terminus, the 208-residue chain is Imidazoleglycerol-phosphate dehydratase (208 aa).

The protein belongs to the imidazoleglycerol-phosphate dehydratase family.

The protein resides in the cytoplasm. The catalysed reaction is D-erythro-1-(imidazol-4-yl)glycerol 3-phosphate = 3-(imidazol-4-yl)-2-oxopropyl phosphate + H2O. Its pathway is amino-acid biosynthesis; L-histidine biosynthesis; L-histidine from 5-phospho-alpha-D-ribose 1-diphosphate: step 6/9. The protein is Imidazoleglycerol-phosphate dehydratase of Hyphomonas neptunium (strain ATCC 15444).